Here is a 309-residue protein sequence, read N- to C-terminus: Probable HTH-type transcriptional regulator LtrA (309 aa).

Residues 1–61 (MNLNLLPDLA…QRTTRKLRLS (61 aa)) enclose the HTH lysR-type domain. The segment at residues 21-40 (FSAVARQNGITPSAVSRSVS) is a DNA-binding region (H-T-H motif).

Belongs to the LysR transcriptional regulatory family.

This Klebsiella pneumoniae protein is Probable HTH-type transcriptional regulator LtrA (ltrA).